The sequence spans 357 residues: Spermatogenesis- and oogenesis-specific basic helix-loop-helix-containing protein 1 (357 aa).

Residues methionine 1–arginine 14 show a composition bias toward basic and acidic residues. The tract at residues methionine 1–serine 40 is disordered. The segment covering threonine 19–aspartate 31 has biased composition (polar residues). Residues proline 54–alanine 105 enclose the bHLH domain. Residues lysine 145–glycine 210 form a disordered region. The span at serine 200–proline 209 shows a compositional bias: low complexity.

Forms both hetero- and homodimers with SOHLH2. In terms of tissue distribution, in males, it is mainly expressed in testis, while in females it is mainly expressed in ovary. In testis, it is exclusively expressed in spermatogonia, with a preference for prespermatogonia and type A spermatogonia. In ovary, it is detected in germ cell cysts, primordial follicles, and primary follicles but is undetectable by the secondary follicle stage (at protein level). Expressed in the majority of spermatogonia in adult animals, but not in the most undifferentiated spermatogonial population.

It is found in the cytoplasm. It localises to the nucleus. In terms of biological role, transcription regulator of both male and female germline differentiation. Suppresses genes involved in spermatogonial stem cells maintenance, and induces genes important for spermatogonial differentiation. Coordinates oocyte differentiation without affecting meiosis I. The sequence is that of Spermatogenesis- and oogenesis-specific basic helix-loop-helix-containing protein 1 (Sohlh1) from Mus musculus (Mouse).